We begin with the raw amino-acid sequence, 497 residues long: Glycine receptor subunit beta (497 aa).

An N-terminal signal peptide occupies residues 1–22 (MKFLLTTAFLILISLWVEEAYS). Residues 23–268 (KEKSSKKGKG…IFTLRRQVGF (246 aa)) are Extracellular-facing. A glycan (N-linked (GlcNAc...) asparagine) is linked at Asn54. The glycine site is built by Arg108 and Ser174. A disulfide bridge links Cys183 with Cys197. N-linked (GlcNAc...) asparagine glycosylation is present at Asn242. Cys243 and Cys255 are joined by a disulfide. Glycine is bound at residue Thr250. The helical transmembrane segment at 269–289 (YMMGVYAPTLLIVVLSWLSFW) threads the bilayer. The Cytoplasmic portion of the chain corresponds to 290–294 (INPDA). Residues 295 to 315 (SAARVPLGIFSVLSLASECTT) traverse the membrane as a helical segment. The Extracellular segment spans residues 316-327 (LAAELPKVSYVK). Residues 328–349 (ALDVWLIACLLFGFASLVEYAV) form a helical membrane-spanning segment. Residues 350-472 (VQVMLNNPKR…KPVIPTAAKR (123 aa)) lie on the Cytoplasmic side of the membrane. Thr391 bears the Phosphothreonine mark. Residues 473–496 (IDLYARALFPFCFLFFNVIYWSIY) traverse the membrane as a helical segment.

It belongs to the ligand-gated ion channel (TC 1.A.9) family. Glycine receptor (TC 1.A.9.3) subfamily. GLRB sub-subfamily. In terms of assembly, forms heteropentamers with glycin receptor alpha subunits. Heteropentamers with GLRA1 can be composed of two GLRA1 and three GLRB subunits, or three GLRA1 and two GLRB subunits, or four GLRA1 subunits and one GLRB subunit. Forms heteropentamers with GLRA2. Functional GLRB-GLRA2 heteropentamers contain four GLRA2 subunits and one GLRB subunit, although alternative subunit composition cannot be excluded. Forms a heteropentamer with GLRA3. Interacts with GPHN.

It localises to the postsynaptic cell membrane. Its subcellular location is the synapse. The protein resides in the cell projection. The protein localises to the dendrite. It is found in the cell membrane. It localises to the cytoplasm. It catalyses the reaction chloride(in) = chloride(out). Its activity is regulated as follows. Channel opening is triggered by extracellular glycine. Heteropentameric channels composed of GLRB and GLRA1 are activated by lower glycine levels than homopentameric GLRA1. Its function is as follows. Subunit of heteromeric glycine-gated chloride channels. Plays an important role in the down-regulation of neuronal excitability. Contributes to the generation of inhibitory postsynaptic currents. The sequence is that of Glycine receptor subunit beta (GLRB) from Homo sapiens (Human).